The chain runs to 462 residues: Fumarate hydratase class II (462 aa).

Residues 98 to 100 (SGT), Arg126, 129 to 132 (HPND), 139 to 141 (SSN), and Thr187 contribute to the substrate site. Residues 120–141 (GTRGKGRKVHPNDHVNKGQSSN) form a disordered region. His188 (proton donor/acceptor) is an active-site residue. The active site involves Ser318. Substrate contacts are provided by residues Ser319 and 324 to 326 (KVN).

It belongs to the class-II fumarase/aspartase family. Fumarase subfamily. As to quaternary structure, homotetramer.

The protein localises to the cytoplasm. It catalyses the reaction (S)-malate = fumarate + H2O. It functions in the pathway carbohydrate metabolism; tricarboxylic acid cycle; (S)-malate from fumarate: step 1/1. Functionally, involved in the TCA cycle. Catalyzes the stereospecific interconversion of fumarate to L-malate. This is Fumarate hydratase class II from Nitrosomonas europaea (strain ATCC 19718 / CIP 103999 / KCTC 2705 / NBRC 14298).